Here is a 128-residue protein sequence, read N- to C-terminus: Small ribosomal subunit protein uS10 (128 aa).

The protein belongs to the universal ribosomal protein uS10 family.

The protein is Small ribosomal subunit protein uS10 (RPS20) of Oryza sativa subsp. japonica (Rice).